A 452-amino-acid polypeptide reads, in one-letter code: Eukaryotic translation initiation factor 3 subunit E (452 aa).

The 170-residue stretch at 257–426 folds into the PCI domain; it reads TDLFFSPAYI…GTVIMNHPPQ (170 aa).

This sequence belongs to the eIF-3 subunit E family. Component of the eukaryotic translation initiation factor 3 (eIF-3) complex.

The protein localises to the cytoplasm. Its function is as follows. Component of the eukaryotic translation initiation factor 3 (eIF-3) complex, which is involved in protein synthesis of a specialized repertoire of mRNAs and, together with other initiation factors, stimulates binding of mRNA and methionyl-tRNAi to the 40S ribosome. The eIF-3 complex specifically targets and initiates translation of a subset of mRNAs involved in cell proliferation. This Aspergillus niger (strain ATCC MYA-4892 / CBS 513.88 / FGSC A1513) protein is Eukaryotic translation initiation factor 3 subunit E (int6).